We begin with the raw amino-acid sequence, 88 residues long: Small ribosomal subunit protein uS17 (88 aa).

This sequence belongs to the universal ribosomal protein uS17 family. In terms of assembly, part of the 30S ribosomal subunit.

Functionally, one of the primary rRNA binding proteins, it binds specifically to the 5'-end of 16S ribosomal RNA. This is Small ribosomal subunit protein uS17 from Oleidesulfovibrio alaskensis (strain ATCC BAA-1058 / DSM 17464 / G20) (Desulfovibrio alaskensis).